The chain runs to 203 residues: High frequency lysogenization protein HflD homolog (203 aa).

Belongs to the HflD family.

Its subcellular location is the cytoplasm. The protein resides in the cell inner membrane. This is High frequency lysogenization protein HflD homolog from Pasteurella multocida (strain Pm70).